The chain runs to 246 residues: Acetoacetyl-CoA reductase (246 aa).

Residues 13 to 15 (GGI), G35, R40, 60 to 62 (GNV), and 88 to 92 (NAGIT) each bind NADP(+). Residues D94 and 147-150 (QFGQ) contribute to the substrate site. The active-site Proton acceptor is the Y153. Position 183–186 (183–186 (PGYI)) interacts with NADP(+). Substrate is bound by residues 184–185 (GY) and R195.

It belongs to the short-chain dehydrogenases/reductases (SDR) family. In terms of assembly, homotetramer.

The protein localises to the cytoplasm. The enzyme catalyses a (3R)-3-hydroxyacyl-CoA + NADP(+) = a 3-oxoacyl-CoA + NADPH + H(+). It catalyses the reaction (3R)-3-hydroxybutanoyl-CoA + NADP(+) = acetoacetyl-CoA + NADPH + H(+). The protein operates within biopolymer metabolism; poly-(R)-3-hydroxybutanoate biosynthesis. Functionally, catalyzes the chiral reduction of acetoacetyl-CoA to (R)-3-hydroxybutyryl-CoA. Is involved in the biosynthesis of polyhydroxybutyrate (PHB), which is accumulated as an intracellular energy reserve material when cells grow under conditions of nutrient limitation. This chain is Acetoacetyl-CoA reductase, found in Cupriavidus necator (strain ATCC 17699 / DSM 428 / KCTC 22496 / NCIMB 10442 / H16 / Stanier 337) (Ralstonia eutropha).